Reading from the N-terminus, the 215-residue chain is Large ribosomal subunit protein uL3 (215 aa).

An N5-methylglutamine modification is found at Q153.

Belongs to the universal ribosomal protein uL3 family. In terms of assembly, part of the 50S ribosomal subunit. Forms a cluster with proteins L14 and L19. Methylated by PrmB.

One of the primary rRNA binding proteins, it binds directly near the 3'-end of the 23S rRNA, where it nucleates assembly of the 50S subunit. The chain is Large ribosomal subunit protein uL3 from Nitrosococcus oceani (strain ATCC 19707 / BCRC 17464 / JCM 30415 / NCIMB 11848 / C-107).